The sequence spans 783 residues: Glucosidase YgjK (783 aa).

The first 22 residues, 1–22, serve as a signal peptide directing secretion; that stretch reads MKIKTILTPVTCALLISFSAHA. Positions 24-254 are N-terminal domain; that stretch reads NADNYKNVIN…TTLYTTYSHL (231 aa). A linker region spans residues 254–299; the sequence is LLTAQEVSKEQMQIRDILARPAFYLTASQQRWEEYLKKGLTNPDAT. The segment at 300–783 is a domain; the sequence is PEQTRVAVKA…MLYNDFFRKQ (484 aa). 5 residues coordinate Ca(2+): Asp454, Asn456, Asn458, Val460, and Glu462. The Proton donor role is filled by Asp524. Position 572 (Glu572) interacts with Ca(2+). Catalysis depends on Glu750, which acts as the Proton acceptor.

This sequence belongs to the glycosyl hydrolase 63 family.

Glucoside hydrolase that cleaves the alpha-1,3-glucosidic linkage in nigerose. Has very low activity towards maltooligosaccharides, soluble starch, nigerotriose, kojibiose and trehalose. The sequence is that of Glucosidase YgjK (ygjK) from Escherichia coli (strain K12).